We begin with the raw amino-acid sequence, 323 residues long: Fructose-1,6-bisphosphatase class 1 (323 aa).

Residues Glu-90, Asp-111, Leu-113, and Asp-114 each coordinate Mg(2+). Substrate is bound by residues 114–117 (DGSS), Tyr-222, and Lys-253. Glu-259 is a binding site for Mg(2+).

Belongs to the FBPase class 1 family. In terms of assembly, homotetramer. Mg(2+) serves as cofactor.

It localises to the cytoplasm. It catalyses the reaction beta-D-fructose 1,6-bisphosphate + H2O = beta-D-fructose 6-phosphate + phosphate. It participates in carbohydrate biosynthesis; gluconeogenesis. This chain is Fructose-1,6-bisphosphatase class 1, found in Pelobacter propionicus (strain DSM 2379 / NBRC 103807 / OttBd1).